Consider the following 86-residue polypeptide: Diphthamide biosynthesis protein 3 (86 aa).

A DPH-type MB domain is found at 4–60; sequence YHDEVEIEDFEYDEEEEMYYYPCPCGDRFQISKEELIEGEEVATCPSCSLVIKVIYD. The Fe cation site is built by C26, C28, C48, and C51.

Belongs to the DPH3 family. As to quaternary structure, component of the 2-(3-amino-3-carboxypropyl)histidine synthase complex composed of Dph1, Dph2, Dph3 and a NADH-dependent reductase. Fe(2+) is required as a cofactor.

The catalysed reaction is [3Fe-4S](1+)-[protein] + Fe(2+)-[Dph3] = [3Fe-4S](0)-[protein] + Fe(3+)-[Dph3]. The enzyme catalyses 2 [3Fe-4S](0)-[protein] + 2 Fe(2+)-[Dph3] + NADH = 2 [4Fe-4S](1+)-[protein] + 2 [Dph3] + NAD(+) + H(+). It participates in protein modification; peptidyl-diphthamide biosynthesis. Functionally, required for the first step of diphthamide biosynthesis, a post-translational modification of histidine which occurs in elongation factor 2. Dph1 and Dph2 transfer a 3-amino-3-carboxypropyl (ACP) group from S-adenosyl-L-methionine (SAM) to a histidine residue, the reaction is assisted by a reduction system comprising Dph3 and a NADH-dependent reductase. Acts as an electron donor to reduce the Fe-S cluster in Dph1-Dph2 keeping the [4Fe-4S] clusters in the active and reduced state. Restores iron to Dph1-Dph2 iron-sulfur clusters which have degraded from [4Fe-4S] to [3Fe-4S] by donating an iron atom to reform [4Fe-4S] clusters, in a manner dependent on the presence of elongation factor 2 and SAM. Associates with the elongator complex and is required for tRNA Wobble base modifications mediated by the elongator complex. The elongator complex is required for multiple tRNA modifications, including mcm5U (5-methoxycarbonylmethyl uridine), mcm5s 2U (5-methoxycarbonylmethyl-2-thiouridine), and ncm5U (5-carbamoylmethyl uridine). This is Diphthamide biosynthesis protein 3 from Drosophila melanogaster (Fruit fly).